We begin with the raw amino-acid sequence, 86 residues long: Small ribosomal subunit protein bS16 (86 aa).

Belongs to the bacterial ribosomal protein bS16 family.

The protein is Small ribosomal subunit protein bS16 of Methylacidiphilum infernorum (isolate V4) (Methylokorus infernorum (strain V4)).